Consider the following 138-residue polypeptide: Nucleoside diphosphate kinase (138 aa).

ATP is bound by residues K10, F58, R86, T92, R103, and N113. Catalysis depends on H116, which acts as the Pros-phosphohistidine intermediate.

The protein belongs to the NDK family. Homotetramer. It depends on Mg(2+) as a cofactor.

Its subcellular location is the cytoplasm. It carries out the reaction a 2'-deoxyribonucleoside 5'-diphosphate + ATP = a 2'-deoxyribonucleoside 5'-triphosphate + ADP. The catalysed reaction is a ribonucleoside 5'-diphosphate + ATP = a ribonucleoside 5'-triphosphate + ADP. Its function is as follows. Major role in the synthesis of nucleoside triphosphates other than ATP. The ATP gamma phosphate is transferred to the NDP beta phosphate via a ping-pong mechanism, using a phosphorylated active-site intermediate. The chain is Nucleoside diphosphate kinase from Actinobacillus pleuropneumoniae serotype 5b (strain L20).